Here is a 954-residue protein sequence, read N- to C-terminus: DNA repair and telomere maintenance protein NBS1 (954 aa).

Positions 22–85 (YLFGRTVAEA…KGTLVNGVQI (64 aa)) constitute an FHA domain. BRCT domains follow at residues 107–186 (TLKI…NAIV) and 244–349 (GYTF…LEAI). The span at 368-377 (VSVSASVEPQ) shows a compositional bias: polar residues. Disordered stretches follow at residues 368–431 (VSVS…FKGF), 444–506 (QAQS…PLPE), 528–580 (IEAG…KQED), 630–654 (VRQPEPHGPNRTREQDIADGRWDPR), and 692–954 (GIGD…GRRR). Over residues 378–393 (SSEKVRPAVEDRKEVE) the composition is skewed to basic and acidic residues. Basic residues predominate over residues 416–428 (PHRRERRTGRSRF). Residues 458–471 (PSASQDSLFVSQRE) are compositionally biased toward polar residues. The span at 541-554 (PEPEREDEDVEMVE) shows a compositional bias: acidic residues. 2 stretches are compositionally biased toward basic and acidic residues: residues 640 to 654 (RTREQDIADGRWDPR) and 704 to 715 (GRVPRRPKETQT). The span at 726-737 (DGSGFAAAAASG) shows a compositional bias: low complexity. The span at 738-751 (KGKEKDKENEKEVG) shows a compositional bias: basic and acidic residues. 2 stretches are compositionally biased toward low complexity: residues 801 to 815 (EVVSSFPSVIPASEP) and 826 to 842 (RANALRSSAHSSQSQTQ). Over residues 936 to 945 (GSEEESEDDE) the composition is skewed to acidic residues.

The protein belongs to the Nibrin family. As to quaternary structure, component of the MRN complex composed of two heterodimers RAD50 and MRE11 associated with a single NBS1.

It localises to the nucleus. The protein resides in the chromosome. Functionally, component of the MRN complex, which plays a central role in double-strand break (DSB) repair, DNA recombination, maintenance of telomere integrity and meiosis. The MRN complex is involved in the repair of DNA double-strand breaks (DSBs) via homologous recombination (HR), an error-free mechanism which primarily occurs during S and G2 phases. The complex (1) mediates the end resection of damaged DNA, which generates proper single-stranded DNA, a key initial steps in HR, and is (2) required for the recruitment of other repair factors and efficient activation of ATM and ATR upon DNA damage. The MRN complex possesses single-strand endonuclease activity and double-strand-specific 3'-5' exonuclease activity, which are provided by MRE11, to initiate end resection, which is required for single-strand invasion and recombination. Within the MRN complex, NBS1 acts as a protein-protein adapter, which specifically recognizes and binds phosphorylated proteins, promoting their recruitment to DNA damage sites. Recruits MRE11 and RAD50 components of the MRN complex to DSBs in response to DNA damage. In Chaetomium thermophilum (strain DSM 1495 / CBS 144.50 / IMI 039719) (Thermochaetoides thermophila), this protein is DNA repair and telomere maintenance protein NBS1.